Here is a 340-residue protein sequence, read N- to C-terminus: Methionine import ATP-binding protein MetN (340 aa).

The ABC transporter domain occupies 6–245 (IEFEGITKVF…PQTNVAKRFV (240 aa)). ATP is bound at residue 42 to 49 (GYSGAGKS).

It belongs to the ABC transporter superfamily. Methionine importer (TC 3.A.1.24) family. The complex is composed of two ATP-binding proteins (MetN), two transmembrane proteins (MetI) and a solute-binding protein (MetQ).

The protein resides in the cell membrane. It catalyses the reaction L-methionine(out) + ATP + H2O = L-methionine(in) + ADP + phosphate + H(+). It carries out the reaction D-methionine(out) + ATP + H2O = D-methionine(in) + ADP + phosphate + H(+). Functionally, part of the ABC transporter complex MetNIQ involved in methionine import. Responsible for energy coupling to the transport system. In Corynebacterium diphtheriae (strain ATCC 700971 / NCTC 13129 / Biotype gravis), this protein is Methionine import ATP-binding protein MetN.